A 276-amino-acid polypeptide reads, in one-letter code: 2-dehydro-3-deoxyphosphooctonate aldolase (276 aa).

The protein belongs to the KdsA family.

Its subcellular location is the cytoplasm. The catalysed reaction is D-arabinose 5-phosphate + phosphoenolpyruvate + H2O = 3-deoxy-alpha-D-manno-2-octulosonate-8-phosphate + phosphate. The protein operates within carbohydrate biosynthesis; 3-deoxy-D-manno-octulosonate biosynthesis; 3-deoxy-D-manno-octulosonate from D-ribulose 5-phosphate: step 2/3. Its pathway is bacterial outer membrane biogenesis; lipopolysaccharide biosynthesis. This chain is 2-dehydro-3-deoxyphosphooctonate aldolase, found in Xylella fastidiosa (strain 9a5c).